Reading from the N-terminus, the 123-residue chain is U11/U12 small nuclear ribonucleoprotein 25 kDa protein (123 aa).

Positions 32 to 123 constitute a Ubiquitin-like domain; that stretch reads MTVRVCKMDG…VSFIKKLRQK (92 aa).

As to quaternary structure, component of the U11/U12 snRNPs that are part of the U12-type spliceosome.

The protein localises to the nucleus. The polypeptide is U11/U12 small nuclear ribonucleoprotein 25 kDa protein (SNRNP25) (Bos taurus (Bovine)).